A 239-amino-acid chain; its full sequence is MVKGELLYEGKAKRIFRSSEEGELWVEYKDDATAFNGEKKETLAGKARLNNDISSLIFATLAKKGIPSHFIRRLSDTEQLVKQVDIIPLEVVVRNVVAGSMAKRLGIEEGIALKKPLVEFYYKDDALGDPLVTEDHIAILDVAAAEEVAQLKQMAAAVNNELIELFATVGVQLIDFKLEFGRTQAGELLLADEISPDTCRLWDKDTKERFDKDLFRRNLGNLQEGYQEILSRLGGLYHV.

Belongs to the SAICAR synthetase family.

It catalyses the reaction 5-amino-1-(5-phospho-D-ribosyl)imidazole-4-carboxylate + L-aspartate + ATP = (2S)-2-[5-amino-1-(5-phospho-beta-D-ribosyl)imidazole-4-carboxamido]succinate + ADP + phosphate + 2 H(+). It functions in the pathway purine metabolism; IMP biosynthesis via de novo pathway; 5-amino-1-(5-phospho-D-ribosyl)imidazole-4-carboxamide from 5-amino-1-(5-phospho-D-ribosyl)imidazole-4-carboxylate: step 1/2. In Shouchella clausii (strain KSM-K16) (Alkalihalobacillus clausii), this protein is Phosphoribosylaminoimidazole-succinocarboxamide synthase.